A 329-amino-acid polypeptide reads, in one-letter code: DNA-directed RNA polymerase subunit alpha (329 aa).

The alpha N-terminal domain (alpha-NTD) stretch occupies residues 1-235 (MQGSVTEFLK…EQLDAFVDLR (235 aa)). Residues 249 to 329 (FDPILLRPVD…NWPPASIAED (81 aa)) are alpha C-terminal domain (alpha-CTD).

It belongs to the RNA polymerase alpha chain family. As to quaternary structure, homodimer. The RNAP catalytic core consists of 2 alpha, 1 beta, 1 beta' and 1 omega subunit. When a sigma factor is associated with the core the holoenzyme is formed, which can initiate transcription.

It catalyses the reaction RNA(n) + a ribonucleoside 5'-triphosphate = RNA(n+1) + diphosphate. Functionally, DNA-dependent RNA polymerase catalyzes the transcription of DNA into RNA using the four ribonucleoside triphosphates as substrates. The chain is DNA-directed RNA polymerase subunit alpha from Aliivibrio fischeri (strain ATCC 700601 / ES114) (Vibrio fischeri).